We begin with the raw amino-acid sequence, 189 residues long: Adenylate kinase homolog MTH_1663 (189 aa).

12 to 20 (GVPGTGKTT) contacts ATP.

Belongs to the archaeal adenylate kinase family.

This is Adenylate kinase homolog MTH_1663 from Methanothermobacter thermautotrophicus (strain ATCC 29096 / DSM 1053 / JCM 10044 / NBRC 100330 / Delta H) (Methanobacterium thermoautotrophicum).